Here is a 65-residue protein sequence, read N- to C-terminus: Large ribosomal subunit protein uL29 (65 aa).

This sequence belongs to the universal ribosomal protein uL29 family.

In Acinetobacter baylyi (strain ATCC 33305 / BD413 / ADP1), this protein is Large ribosomal subunit protein uL29.